The following is a 423-amino-acid chain: UPF0229 protein VV2350 (423 aa).

The tract at residues 81–111 (QFITGDKIERPKGGQGGGGAGDGDASADGEG) is disordered. Positions 93–102 (GGQGGGGAGD) are enriched in gly residues.

Belongs to the UPF0229 family.

This Vibrio vulnificus (strain YJ016) protein is UPF0229 protein VV2350.